The sequence spans 86 residues: Small ribosomal subunit protein uS17 (86 aa).

This sequence belongs to the universal ribosomal protein uS17 family. In terms of assembly, part of the 30S ribosomal subunit.

In terms of biological role, one of the primary rRNA binding proteins, it binds specifically to the 5'-end of 16S ribosomal RNA. The chain is Small ribosomal subunit protein uS17 from Streptococcus pyogenes serotype M6 (strain ATCC BAA-946 / MGAS10394).